We begin with the raw amino-acid sequence, 79 residues long: U-actitoxin-Bgr3d (79 aa).

A signal peptide spans 1 to 21 (MSYERLLCLVLVASFIAASVA). The propeptide occupies 22-38 (QHPGDAPRMEDDSSAIQ). Cystine bridges form between cysteine 44–cysteine 76, cysteine 46–cysteine 69, and cysteine 59–cysteine 77.

This sequence belongs to the sea anemone type 3 (BDS) potassium channel toxin family.

Its subcellular location is the secreted. The protein localises to the nematocyst. Functionally, potently and selectively inhibits voltage-gated potassium channels Kv11/KCNH/ERG. Acts as a gating-modifier toxin that shifts the voltage-dependence of ERG activation in the positive direction and suppresses its current amplitudes elicited by strong depolarizing pulses that maximally activate the channels. The protein is U-actitoxin-Bgr3d of Bunodosoma granuliferum (Red warty sea anemone).